The following is a 308-amino-acid chain: MPYTFENSEALLKNLKDAAPYISAAERFASFKGFVYDKRINIACTSEKLARAGFYSTASPEFPASAKCPFCMLEINFEQCDDPWEKHKSGSPHCEFVMIGEIEESELSFRIISNLAIRHATVRLYEELLGIVATLENGDIANENPITRADATRKLISFRSSSKLLTFDHRLATFQNFIFDKKRNVKCTSKKLAKAGWFSIANKKDKTSAKCPFCLVELDFDESDDPWEEHQKFSASCDFIKLGKLDEKKWTENEALMLGARITIMQKYEKGSWLIDELEKENRIDEIIKIRKIMIKPNHVLKRRRCSI.

BIR repeat units follow at residues 27–98 (RFAS…EFVM) and 170–241 (RLAT…DFIK). Residues Cys68, Cys71, His87, Cys94, Cys211, Cys214, His230, and Cys237 each contribute to the Zn(2+) site.

This sequence belongs to the IAP family.

The sequence is that of Baculoviral IAP repeat-containing protein bir-2 from Caenorhabditis elegans.